Reading from the N-terminus, the 356-residue chain is tRNA-specific 2-thiouridylase MnmA 1 (356 aa).

Residues 8 to 15 and Met-34 contribute to the ATP site; that span reads GMSGGVDS. The Nucleophile role is filled by Cys-103. An intrachain disulfide couples Cys-103 to Cys-199. ATP is bound at residue Gly-127. Residues 149–151 form an interaction with tRNA region; the sequence is KDQ. Cys-199 functions as the Cysteine persulfide intermediate in the catalytic mechanism. Positions 305–306 are interaction with tRNA; that stretch reads RY.

Belongs to the MnmA/TRMU family.

It localises to the cytoplasm. The enzyme catalyses S-sulfanyl-L-cysteinyl-[protein] + uridine(34) in tRNA + AH2 + ATP = 2-thiouridine(34) in tRNA + L-cysteinyl-[protein] + A + AMP + diphosphate + H(+). Its function is as follows. Catalyzes the 2-thiolation of uridine at the wobble position (U34) of tRNA, leading to the formation of s(2)U34. The chain is tRNA-specific 2-thiouridylase MnmA 1 from Clostridium botulinum (strain Langeland / NCTC 10281 / Type F).